Reading from the N-terminus, the 207-residue chain is Large ribosomal subunit protein uL4 (207 aa).

Over residues 43-52 (NKRQGTQSAK) the composition is skewed to polar residues. The disordered stretch occupies residues 43 to 72 (NKRQGTQSAKTRAEVRGGGRKPWKQKGTGR). Over residues 60-71 (GGRKPWKQKGTG) the composition is skewed to basic residues.

It belongs to the universal ribosomal protein uL4 family. As to quaternary structure, part of the 50S ribosomal subunit.

One of the primary rRNA binding proteins, this protein initially binds near the 5'-end of the 23S rRNA. It is important during the early stages of 50S assembly. It makes multiple contacts with different domains of the 23S rRNA in the assembled 50S subunit and ribosome. Its function is as follows. Forms part of the polypeptide exit tunnel. In Alkaliphilus metalliredigens (strain QYMF), this protein is Large ribosomal subunit protein uL4.